We begin with the raw amino-acid sequence, 348 residues long: Large ribosomal subunit protein uL3m (348 aa).

The N-terminal 40 residues, Met-1–Gly-40, are a transit peptide targeting the mitochondrion.

This sequence belongs to the universal ribosomal protein uL3 family. As to quaternary structure, component of the mitochondrial large ribosomal subunit (mt-LSU). Mature mammalian 55S mitochondrial ribosomes consist of a small (28S) and a large (39S) subunit. The 28S small subunit contains a 12S ribosomal RNA (12S mt-rRNA) and 30 different proteins. The 39S large subunit contains a 16S rRNA (16S mt-rRNA), a copy of mitochondrial valine transfer RNA (mt-tRNA(Val)), which plays an integral structural role, and 52 different proteins.

Its subcellular location is the mitochondrion. This Homo sapiens (Human) protein is Large ribosomal subunit protein uL3m (MRPL3).